The following is a 176-amino-acid chain: ATP-dependent protease subunit HslV (176 aa).

Threonine 5 is an active-site residue. Na(+) is bound by residues glycine 161, cysteine 164, and threonine 167.

This sequence belongs to the peptidase T1B family. HslV subfamily. In terms of assembly, a double ring-shaped homohexamer of HslV is capped on each side by a ring-shaped HslU homohexamer. The assembly of the HslU/HslV complex is dependent on binding of ATP.

The protein localises to the cytoplasm. The enzyme catalyses ATP-dependent cleavage of peptide bonds with broad specificity.. With respect to regulation, allosterically activated by HslU binding. In terms of biological role, protease subunit of a proteasome-like degradation complex believed to be a general protein degrading machinery. In Wolinella succinogenes (strain ATCC 29543 / DSM 1740 / CCUG 13145 / JCM 31913 / LMG 7466 / NCTC 11488 / FDC 602W) (Vibrio succinogenes), this protein is ATP-dependent protease subunit HslV.